We begin with the raw amino-acid sequence, 125 residues long: Large ribosomal subunit protein bL17 (125 aa).

The protein belongs to the bacterial ribosomal protein bL17 family. In terms of assembly, part of the 50S ribosomal subunit. Contacts protein L32.

The protein is Large ribosomal subunit protein bL17 of Marinomonas sp. (strain MWYL1).